The chain runs to 423 residues: Adenylosuccinate synthetase (423 aa).

GTP contacts are provided by residues 11–17 (GDEGKGK) and 39–41 (GHT). Catalysis depends on aspartate 12, which acts as the Proton acceptor. Mg(2+) is bound by residues aspartate 12 and glycine 39. Residues 12–15 (DEGK), 37–40 (NAGH), threonine 129, arginine 143, asparagine 219, threonine 234, and arginine 298 each bind IMP. Residue histidine 40 is the Proton donor of the active site. 294-300 (VTTGRRR) is a binding site for substrate. GTP-binding positions include arginine 300, 326 to 328 (KLD), and 411 to 413 (GTG).

It belongs to the adenylosuccinate synthetase family. In terms of assembly, homodimer. Mg(2+) serves as cofactor.

The protein localises to the cytoplasm. The enzyme catalyses IMP + L-aspartate + GTP = N(6)-(1,2-dicarboxyethyl)-AMP + GDP + phosphate + 2 H(+). It participates in purine metabolism; AMP biosynthesis via de novo pathway; AMP from IMP: step 1/2. In terms of biological role, plays an important role in the de novo pathway and in the salvage pathway of purine nucleotide biosynthesis. Catalyzes the first committed step in the biosynthesis of AMP from IMP. This chain is Adenylosuccinate synthetase, found in Penicillium rubens (strain ATCC 28089 / DSM 1075 / NRRL 1951 / Wisconsin 54-1255) (Penicillium chrysogenum).